The primary structure comprises 946 residues: Bifunctional glutamine synthetase adenylyltransferase/adenylyl-removing enzyme (946 aa).

Residues 1-440 form an adenylyl removase region; that stretch reads MKPLSSPLQQ…VFNELIGDDE (440 aa). The adenylyl transferase stretch occupies residues 449 to 946; that stretch reads SEQWRELWQD…ASWQKWLVEE (498 aa).

The protein belongs to the GlnE family. Mg(2+) is required as a cofactor.

It catalyses the reaction [glutamine synthetase]-O(4)-(5'-adenylyl)-L-tyrosine + phosphate = [glutamine synthetase]-L-tyrosine + ADP. The catalysed reaction is [glutamine synthetase]-L-tyrosine + ATP = [glutamine synthetase]-O(4)-(5'-adenylyl)-L-tyrosine + diphosphate. Involved in the regulation of glutamine synthetase GlnA, a key enzyme in the process to assimilate ammonia. When cellular nitrogen levels are high, the C-terminal adenylyl transferase (AT) inactivates GlnA by covalent transfer of an adenylyl group from ATP to specific tyrosine residue of GlnA, thus reducing its activity. Conversely, when nitrogen levels are low, the N-terminal adenylyl removase (AR) activates GlnA by removing the adenylyl group by phosphorolysis, increasing its activity. The regulatory region of GlnE binds the signal transduction protein PII (GlnB) which indicates the nitrogen status of the cell. In Escherichia coli O7:K1 (strain IAI39 / ExPEC), this protein is Bifunctional glutamine synthetase adenylyltransferase/adenylyl-removing enzyme.